The chain runs to 443 residues: MSLPFLTSAPGKVIIFGEHSAVYNKPAVAASVSALRTYLLISESSAPDTIELDFPDISFNHKWSINDFNAITEDQVNSQKLAKAQQATDGLSQELVSLLDPLLAQLSESFHYHAAFCFLYMFVCLCPHAKNIKFSLKSTLPIGAGLGSSASISVSLALAMAYLGGLIGSNDLEKLSENDKHIVNQWAFIGEKCIHGTPSGIDNAVATYGNALLFEKDSHNGTINTNNFKFLDDFPAIPMILTYTRIPRSTKDLVARVRVLVTEKFPEVMKPILDAMGECALQGLEIMTKLSKCKGTDDEAVETNNELYEQLLELIRINHGLLVSIGVSHPGLELIKNLSDDLRIGSTKLTGAGGGGCSLTLLRRDITQEQIDSFKKKLQDDFSYETFETDLGGTGCCLLSAKNLNKDLKIKSLVFQLFENKTTTKQQIDDLLLPGNTNLPWTS.

ATP contacts are provided by residues Lys-12, Ser-138, and 143–149; that span reads GAGLGSS. Mg(2+) contacts are provided by Ser-149 and Glu-191. The active-site Proton acceptor is Asp-202.

This sequence belongs to the GHMP kinase family. Mevalonate kinase subfamily. As to quaternary structure, homodimer. Requires Mg(2+) as cofactor.

The protein resides in the cytoplasm. It localises to the cytosol. It carries out the reaction (R)-mevalonate + ATP = (R)-5-phosphomevalonate + ADP + H(+). The protein operates within isoprenoid biosynthesis; isopentenyl diphosphate biosynthesis via mevalonate pathway; isopentenyl diphosphate from (R)-mevalonate: step 1/3. Farnesyl pyrophosphate and geranyl pyrophosphate inhibit mevalonate kinase by binding competitively at the ATP-binding site. Its function is as follows. Mevalonate kinase; part of the second module of ergosterol biosynthesis pathway that includes the middle steps of the pathway. ERG12 converts mevalonate into 5-phosphomevalonate. The second module is carried out in the vacuole and involves the formation of farnesyl diphosphate, which is also an important intermediate in the biosynthesis of ubiquinone, dolichol, heme and prenylated proteins. Activity by the mevalonate kinase ERG12 first converts mevalonate into 5-phosphomevalonate. 5-phosphomevalonate is then further converted to 5-diphosphomevalonate by the phosphomevalonate kinase ERG8. The diphosphomevalonate decarboxylase MVD1/ERG19 then produces isopentenyl diphosphate. The isopentenyl-diphosphate delta-isomerase IDI1 then catalyzes the 1,3-allylic rearrangement of the homoallylic substrate isopentenyl (IPP) to its highly electrophilic allylic isomer, dimethylallyl diphosphate (DMAPP). Finally the farnesyl diphosphate synthase ERG20 catalyzes the sequential condensation of isopentenyl pyrophosphate with dimethylallyl pyrophosphate, and then with the resultant geranylpyrophosphate to the ultimate product farnesyl pyrophosphate. The protein is Mevalonate kinase of Saccharomyces cerevisiae (strain ATCC 204508 / S288c) (Baker's yeast).